The primary structure comprises 479 residues: MLFWHTQPEHYNQHNSGSYLRDVLALPIFKQEEPQLSPENEARLPPLQYVLCAATSPAVKLHEETLTYLNQGQSYEIRLLENRKLGDFQDLNTKYVKSIIRVVFHDRRLQYTEHQQLEGWRWSRPGDRILDIDIPLSVGILDPRASPTQLNAVEFLWDPAKRASAFIQVHCISTEFTPRKHGGEKGVPFRVQIDTFKQNENGEYTEHLHSASCQIKVFKPKGADRKQKTDREKMEKRTAQEKEKYQPSYETTILTECSPWPDVAYQVNSAPSPSYNGSPNSFGLGEGNASPTHPVEALPVGSDHLLPSASIQDAQQWLHRNRFSQFCRLFASFSGADLLKMSRDDLVQICGPADGIRLFNAIKGRNVRPKMTIYVCQELEQNRVPLQQKRDGSGDSNLSVYHAIFLEELTTLELIEKIANLYSISPQHIHRVYRQGPTGIHVVVSNEMVQNFQDESCFVLSTIKAESNDGYHIILKCGL.

One can recognise a Grh/CP2 DB domain in the interval Arg43 to Asn280. 2 disordered regions span residues Lys219–Tyr245 and Pro271–Gly301. The segment covering Lys221–Tyr245 has biased composition (basic and acidic residues). Residues Pro261–Arg365 form an SAM2-like domain region. A compositionally biased stretch (polar residues) spans Pro271–Ser281.

Belongs to the grh/CP2 family. CP2 subfamily. Forms homohexamers via its SAM-like domain. Interacts with MTA1; which is indispensable for TFCP2l1-mediated self-renewal-promoting effect and endoderm-inhibiting action. Highly expressed in placental JEG-3 cells and very low levels of expression in non-steroidogenic cells. No expression was seen in adrenal NCI-H295A cells or in adrenal tissue.

It is found in the nucleus. In terms of biological role, transcription factor that facilitates establishment and maintenance of pluripotency in embryonic stem cells (ESCs). With KLF2, acts as the major effector of self-renewal that mediates induction of pluripotency downstream of LIF/STAT3 and Wnt/beta-catenin signaling. Required for normal duct development in the salivary gland and kidney. Coordinates the development of the kidney collecting ducts intercalated (IC) and principal (PC) cells, which regulate acid-base and salt-water homeostasis, respectively. Regulates the expression of IC genes including subunits B1 and D2 of the V-ATPase complex, OXGR1, CA12, SLC4A1, AQP6 and IC-specific transcription factor FOXI1. Also regulates the expression of JAG1 and subsequent notch signaling in the collecting duct. JAG1 initiates notch signaling in PCs but inhibits notch signaling in ICs. Acts as a transcriptional suppressor that may suppress UBP1-mediated transcriptional activation. Modulates the placental expression of CYP11A1. The protein is Transcription factor CP2-like protein 1 (TFCP2L1) of Homo sapiens (Human).